The chain runs to 301 residues: ATP synthase gamma chain (301 aa).

This sequence belongs to the ATPase gamma chain family. As to quaternary structure, F-type ATPases have 2 components, CF(1) - the catalytic core - and CF(0) - the membrane proton channel. CF(1) has five subunits: alpha(3), beta(3), gamma(1), delta(1), epsilon(1). CF(0) has three main subunits: a, b and c.

The protein resides in the cell inner membrane. Produces ATP from ADP in the presence of a proton gradient across the membrane. The gamma chain is believed to be important in regulating ATPase activity and the flow of protons through the CF(0) complex. The sequence is that of ATP synthase gamma chain from Helicobacter acinonychis (strain Sheeba).